We begin with the raw amino-acid sequence, 180 residues long: ATP synthase subunit delta (180 aa).

It belongs to the ATPase delta chain family. F-type ATPases have 2 components, F(1) - the catalytic core - and F(0) - the membrane proton channel. F(1) has five subunits: alpha(3), beta(3), gamma(1), delta(1), epsilon(1). F(0) has three main subunits: a(1), b(2) and c(10-14). The alpha and beta chains form an alternating ring which encloses part of the gamma chain. F(1) is attached to F(0) by a central stalk formed by the gamma and epsilon chains, while a peripheral stalk is formed by the delta and b chains.

It is found in the cell membrane. Its function is as follows. F(1)F(0) ATP synthase produces ATP from ADP in the presence of a proton or sodium gradient. F-type ATPases consist of two structural domains, F(1) containing the extramembraneous catalytic core and F(0) containing the membrane proton channel, linked together by a central stalk and a peripheral stalk. During catalysis, ATP synthesis in the catalytic domain of F(1) is coupled via a rotary mechanism of the central stalk subunits to proton translocation. Functionally, this protein is part of the stalk that links CF(0) to CF(1). It either transmits conformational changes from CF(0) to CF(1) or is implicated in proton conduction. The polypeptide is ATP synthase subunit delta (Leuconostoc mesenteroides subsp. mesenteroides (strain ATCC 8293 / DSM 20343 / BCRC 11652 / CCM 1803 / JCM 6124 / NCDO 523 / NBRC 100496 / NCIMB 8023 / NCTC 12954 / NRRL B-1118 / 37Y)).